A 1354-amino-acid polypeptide reads, in one-letter code: Ubiquitin carboxyl-terminal hydrolase 47 (1354 aa).

Polar residues predominate over residues 114–133 (EQPQLASDESGTADSSGLDD). The tract at residues 114–139 (EQPQLASDESGTADSSGLDDSTQEKF) is disordered. Residues 174-549 (VGLVNQAMTC…NAYMLMYRLK (376 aa)) enclose the USP domain. The active-site Nucleophile is the Cys183. The segment at 408–438 (DVEDEKSPQTDSCTDSGAENEGSCHSDQMSN) is disordered. Over residues 416-438 (QTDSCTDSGAENEGSCHSDQMSN) the composition is skewed to polar residues. His488 acts as the Proton acceptor in catalysis. Residues 863-882 (LSLQQHQDGGNGDSSKSTEG) show a composition bias toward polar residues. 2 disordered regions span residues 863–1004 (LSLQ…ESGK) and 1314–1335 (LAKK…SPRK). Residues 920–930 (PEERSDSDVNN) are compositionally biased toward basic and acidic residues. The span at 933 to 949 (STSSVDSDILSSSHSSD) shows a compositional bias: low complexity. Over residues 977-986 (KANDGKKETW) the composition is skewed to basic and acidic residues. Residues 987–1000 (DTAEEDSGTDSEYD) are compositionally biased toward acidic residues.

This sequence belongs to the peptidase C19 family. USP47 subfamily.

It localises to the cytoplasm. The catalysed reaction is Thiol-dependent hydrolysis of ester, thioester, amide, peptide and isopeptide bonds formed by the C-terminal Gly of ubiquitin (a 76-residue protein attached to proteins as an intracellular targeting signal).. Functionally, ubiquitin-specific protease that specifically deubiquitinates monoubiquitinated DNA polymerase beta (polb), stabilizing polb thereby playing a role in base-excision repair (BER). The protein is Ubiquitin carboxyl-terminal hydrolase 47 (usp47) of Xenopus tropicalis (Western clawed frog).